A 131-amino-acid polypeptide reads, in one-letter code: Neo-calmodulin (131 aa).

4 EF-hand domains span residues 1 to 32 (EFKE…LGQN), 33 to 68 (PTEA…KMKD), 70 to 105 (DSEE…LGEK), and 106 to 131 (LTDE…YEEF). Residues Asp10, Asp12, Asp14, Thr16, Glu21, Asp46, Asp48, Asn50, Thr52, Glu57, Asp83, Asp85, Asn87, Tyr89, Glu94, Asp119, Asp121, Asp123, Gln125, and Glu130 each coordinate Ca(2+).

It belongs to the calmodulin family.

The protein is Neo-calmodulin of Gallus gallus (Chicken).